A 214-amino-acid chain; its full sequence is Metalloproteinase inhibitor 3 (214 aa).

The N-terminal stretch at 1–26 (MVFSTTAALSLLLALSSMQLSEVSEA) is a signal peptide. C27 contributes to the Zn(2+) binding site. Involved in metalloproteinase-binding regions lie at residues 27–30 (CTCM) and 91–92 (ES). 6 disulfides stabilise this stretch: C27–C94, C29–C121, C39–C146, C148–C195, C153–C158, and C166–C187. The NTR domain maps to 27–146 (CTCMPNHPQE…GLNHRYQYGC (120 aa)). An N-linked (GlcNAc...) asparagine glycan is attached at N210.

The protein belongs to the protease inhibitor I35 (TIMP) family. In terms of tissue distribution, expressed abundantly in brain and cartilage.

It is found in the secreted. The protein localises to the extracellular space. Its subcellular location is the extracellular matrix. Functionally, complexes with metalloproteinases (such as collagenases) and irreversibly inactivates them by binding to their catalytic zinc cofactor. May form part of a tissue-specific acute response to remodeling stimuli. This chain is Metalloproteinase inhibitor 3 (TIMP3), found in Scyliorhinus torazame (Cloudy catshark).